The sequence spans 116 residues: ATP synthase lipid-binding protein, mitochondrial (116 aa).

The transit peptide at 1-24 (MYCQRLALPLTRSLLASRAPLALR) directs the protein to the mitochondrion. A helical membrane pass occupies residues 57-77 (VGVAGSGAGIGNVFGALVIGY). The residue at position 84 (K84) is an N6,N6,N6-trimethyllysine. A helical membrane pass occupies residues 92 to 112 (ILGFALSEAMGLFCLTMGFMI).

It belongs to the ATPase C chain family. As to quaternary structure, F-type ATPases have 2 components, CF(1) - the catalytic core - and CF(0) - the membrane proton channel. CF(1) has five subunits: alpha(3), beta(3), gamma(1), delta(1), epsilon(1). CF(0) has three main subunits: a, b and c. Post-translationally, trimethylated by ATPSCKMT at Lys-84. Methylation may be required for proper incorporation of the C subunit into the ATP synthase complex and mitochondrial respiration.

Its subcellular location is the mitochondrion membrane. In terms of biological role, mitochondrial membrane ATP synthase (F(1)F(0) ATP synthase or Complex V) produces ATP from ADP in the presence of a proton gradient across the membrane which is generated by electron transport complexes of the respiratory chain. F-type ATPases consist of two structural domains, F(1) - containing the extramembraneous catalytic core and F(0) - containing the membrane proton channel, linked together by a central stalk and a peripheral stalk. During catalysis, ATP synthesis in the catalytic domain of F(1) is coupled via a rotary mechanism of the central stalk subunits to proton translocation. Part of the complex F(0) domain. A homomeric c-ring of probably 10 subunits is part of the complex rotary element. The chain is ATP synthase lipid-binding protein, mitochondrial from Caenorhabditis briggsae.